We begin with the raw amino-acid sequence, 690 residues long: Probable xyloglucan glycosyltransferase 1 (690 aa).

The next 2 helical transmembrane spans lie at 120–140 and 166–186; these read AFLLLSVLLLAVDVAAHAQGW and LEYLAPGLQFLANACVVLFLI. Residue aspartate 272 is part of the active site. Aspartate 331 and aspartate 333 together coordinate substrate. Residue aspartate 425 is part of the active site. The next 2 membrane-spanning stretches (helical) occupy residues 503–523 and 528–548; these read LILPFYSFTLFCIILPMTMFV and LPAWVVCYIPATMSLLNILPA. The disordered stretch occupies residues 607 to 637; that stretch reads QPKQQRVGSAPNLDSLAKESHPKKDSKKKKH. 2 helical membrane passes run 640–659 and 665–685; these read IYQKELALSFLLLTAAARSL and IHFYFLLFQGVSFLVVGLDLI.

Belongs to the glycosyltransferase 2 family. Plant cellulose synthase-like C subfamily.

The protein localises to the golgi apparatus membrane. Functionally, probable beta-1,4-glucan synthase rather involved in the synthesis of the xyloglucan backbone than cellulose. Seems to work simultaneously with xyloglucan 6-xylosyltransferase. Xyloglucan is a noncellulosic polysaccharides of plant cell wall and consists of a glucan backbone substituted by xylose, galactose and fucose. The chain is Probable xyloglucan glycosyltransferase 1 (CSLC1) from Oryza sativa subsp. japonica (Rice).